The sequence spans 210 residues: Tissue inhibitor of metalloproteinase (210 aa).

A signal peptide spans 1–27 (MDLRKHLGLLTLLLVAVFAFYGRPADA). Cys-28 is a binding site for Zn(2+). Involved in metalloproteinase-binding stretches follow at residues 28–31 (CSCM) and 93–94 (DA). 5 disulfide bridges follow: Cys-28–Cys-96, Cys-30–Cys-118, Cys-145–Cys-195, Cys-150–Cys-155, and Cys-165–Cys-180. One can recognise an NTR domain in the interval 28–145 (CSCMPSHPQT…SGGYAKATNC (118 aa)).

This sequence belongs to the protease inhibitor I35 (TIMP) family. In terms of tissue distribution, expressed in heads of female and male adult flies. Expressed at the time of eclosion in unopened wings of adult flies. Strongly expressed at the tip of ovarian germarium region 1 where germline stem cells (GSCs) and cystoblasts reside and in region 2 of the germarium.

It localises to the secreted. Metalloproteinase inhibitor that acts on both matrix metalloproteinases Mmp1 and Mmp2 in vitro. Complexes with metalloproteinases and irreversibly inactivates them by binding to their catalytic zinc cofactor. Required for wing maturation which is the final step in morphogenesis of the adult fly. Involved in the negative regulation of developmental tissue invasion for imaginal disk eversion during metamorphosis by inhibiting Mmp-mediated basement membrane (BM) degradation. Required for oogenesis and for the long-term maintainance of germarial structure and shape in the adult ovaries. Required for maintaining composition and biophysical properties of the extracellular matrix (ECM), and for the normal organization and cyst production of the germline stem cell (GSC) niche. This Drosophila melanogaster (Fruit fly) protein is Tissue inhibitor of metalloproteinase.